The primary structure comprises 308 residues: Acetylglutamate kinase (308 aa).

Substrate contacts are provided by residues 86–87, Arg-108, and Asn-201; that span reads GG.

Belongs to the acetylglutamate kinase family. ArgB subfamily.

The protein localises to the cytoplasm. It carries out the reaction N-acetyl-L-glutamate + ATP = N-acetyl-L-glutamyl 5-phosphate + ADP. The protein operates within amino-acid biosynthesis; L-arginine biosynthesis; N(2)-acetyl-L-ornithine from L-glutamate: step 2/4. Functionally, catalyzes the ATP-dependent phosphorylation of N-acetyl-L-glutamate. The chain is Acetylglutamate kinase from Prochlorococcus marinus (strain MIT 9313).